A 490-amino-acid chain; its full sequence is Colicin-10 (490 aa).

Residues 1 to 20 (MDKVTDNSPDVESTESTEGS) show a composition bias toward polar residues. 2 disordered regions span residues 1 to 29 (MDKV…VDTG) and 146 to 171 (QKAR…EIAR). Residues 146-170 (QKAREEAEAAEKALREAERQRDEIA) show a composition bias toward basic and acidic residues. Residues 447–467 (IVALMFSFIVGAPLGFWGIAI) form a helical membrane-spanning segment.

This sequence belongs to the channel forming colicin family.

It is found in the host membrane. Functionally, this colicin is a channel-forming colicin. This class of transmembrane toxins depolarize the cytoplasmic membrane, leading to dissipation of cellular energy. Its function is as follows. Colicins are polypeptide toxins produced by and active against E.coli and closely related bacteria. This is Colicin-10 (cta) from Escherichia coli.